The primary structure comprises 844 residues: DNA mismatch repair protein MutS (844 aa).

602–609 contacts ATP; the sequence is GPNMSGKS.

This sequence belongs to the DNA mismatch repair MutS family.

Functionally, this protein is involved in the repair of mismatches in DNA. It is possible that it carries out the mismatch recognition step. This protein has a weak ATPase activity. This Streptococcus pneumoniae (strain Hungary19A-6) protein is DNA mismatch repair protein MutS.